Here is a 100-residue protein sequence, read N- to C-terminus: Urease subunit gamma (100 aa).

It belongs to the urease gamma subunit family. Heterotrimer of UreA (gamma), UreB (beta) and UreC (alpha) subunits. Three heterotrimers associate to form the active enzyme.

The protein resides in the cytoplasm. It carries out the reaction urea + 2 H2O + H(+) = hydrogencarbonate + 2 NH4(+). Its pathway is nitrogen metabolism; urea degradation; CO(2) and NH(3) from urea (urease route): step 1/1. The protein is Urease subunit gamma of Pseudomonas aeruginosa (strain UCBPP-PA14).